A 333-amino-acid polypeptide reads, in one-letter code: L-lactate dehydrogenase B chain (333 aa).

NAD(+) contacts are provided by residues 29 to 57 and Arg-99; that span reads GQVG…LEDK. Substrate-binding residues include Arg-106, Asn-138, and Arg-169. Asn-138 contributes to the NAD(+) binding site. His-193 serves as the catalytic Proton acceptor. Thr-248 contributes to the substrate binding site.

The protein belongs to the LDH/MDH superfamily. LDH family. Homotetramer.

The protein localises to the cytoplasm. It carries out the reaction (S)-lactate + NAD(+) = pyruvate + NADH + H(+). It functions in the pathway fermentation; pyruvate fermentation to lactate; (S)-lactate from pyruvate: step 1/1. Its function is as follows. Interconverts simultaneously and stereospecifically pyruvate and lactate with concomitant interconversion of NADH and NAD(+). The protein is L-lactate dehydrogenase B chain (LDHB) of Sceloporus woodi (Florida scrub lizard).